The primary structure comprises 704 residues: Meprin A subunit beta (704 aa).

An N-terminal signal peptide occupies residues 1–20 (MDARHWPWFLVFATFLLVSG). Residues 21–64 (LPAPEKFVKDIDGGIDQDIFDINEDLGLDLFEGDIKLEASGRNS) constitute a propeptide that is removed on maturation. Residues 21 to 654 (LPAPEKFVKD…RCEKRGSTKD (634 aa)) are Extracellular-facing. A Peptidase M12A domain is found at 63 to 257 (NSIIGDNYRW…LKLNQLYSCT (195 aa)). Cystine bridges form between cysteine 104-cysteine 256, cysteine 125-cysteine 145, and cysteine 266-cysteine 428. Histidine 153 contributes to the Zn(2+) binding site. Glutamate 154 is an active-site residue. Positions 157 and 163 each coordinate Zn(2+). Asparagine 193, asparagine 219, asparagine 316, asparagine 422, asparagine 437, asparagine 528, asparagine 547, and asparagine 592 each carry an N-linked (GlcNAc...) asparagine glycan. The 170-residue stretch at 261 to 430 (SFMDSCDFEL…INLSETRCPH (170 aa)) folds into the MAM domain. The MATH domain maps to 431 to 585 (HIWHIQNFTQ…GDDVYILLTV (155 aa)). The EGF-like domain occupies 607–647 (VHNACSEVECQNGGICTLQEGRAECKCPAGEDWWYMGKRCE). 3 cysteine pairs are disulfide-bonded: cysteine 611/cysteine 622, cysteine 616/cysteine 631, and cysteine 633/cysteine 646. A helical transmembrane segment spans residues 655 to 678 (TIVIAVSSTVTVFAVMLIITLISV). The Cytoplasmic segment spans residues 679-704 (YCTRRKYRKKASAKTAAMNLENQHAF). At threonine 693 the chain carries Phosphothreonine.

Homotetramer consisting of disulfide-linked beta subunits, or heterotetramer of two alpha and two beta subunits formed by non-covalent association of two disulfide-linked heterodimers. Interacts with MBL2 through its carbohydrate moiety. This interaction may inhibit its catalytic activity. Interacts with TSPAN8. Zn(2+) serves as cofactor. N-glycosylated; contains high mannose and/or complex biantennary structures. Post-translationally, proteolytically activated by trypsin in the intestinal lumen and kallikrein-related peptidases in other tissues. In terms of processing, phosphorylated by PKC at multiple sites of its cytoplasmic part. Phosphorylation dcreases activity at the cell surface, leading to diminished substrate cleavage. In terms of tissue distribution, kidney, intestinal brush borders and salivary ducts.

The protein resides in the cell membrane. The protein localises to the secreted. It catalyses the reaction Hydrolysis of proteins, including azocasein, and peptides. Hydrolysis of 5-His-|-Leu-6, 6-Leu-|-Cys-7, 14-Ala-|-Leu-15 and 19-Cys-|-Gly-20 bonds in insulin B chain.. Its activity is regulated as follows. Strongly inhibited by fetuin-A/AHSG. Its function is as follows. Membrane metallopeptidase that sheds many membrane-bound proteins. Exhibits a strong preference for acidic amino acids at the P1' position. Known substrates include: FGF19, VGFA, IL1B, IL18, procollagen I and III, E-cadherin, KLK7, gastrin, ADAM10, tenascin-C. The presence of several pro-inflammatory cytokine among substrates implicate MEP1B in inflammation. It is also involved in tissue remodeling due to its capability to degrade extracellular matrix components. This is Meprin A subunit beta (Mep1b) from Rattus norvegicus (Rat).